A 146-amino-acid chain; its full sequence is Ribosome-binding factor A (146 aa).

The segment covering 122–134 has biased composition (polar residues); sequence QQQFGSAEDVTSN. Residues 122–146 are disordered; that stretch reads QQQFGSAEDVTSNDIDEADDTEGKA. The span at 135–146 shows a compositional bias: acidic residues; sequence DIDEADDTEGKA.

Belongs to the RbfA family. Monomer. Binds 30S ribosomal subunits, but not 50S ribosomal subunits or 70S ribosomes.

It is found in the cytoplasm. Its function is as follows. One of several proteins that assist in the late maturation steps of the functional core of the 30S ribosomal subunit. Associates with free 30S ribosomal subunits (but not with 30S subunits that are part of 70S ribosomes or polysomes). Required for efficient processing of 16S rRNA. May interact with the 5'-terminal helix region of 16S rRNA. The protein is Ribosome-binding factor A of Shewanella sp. (strain ANA-3).